An 816-amino-acid chain; its full sequence is Homeobox-leucine zipper protein ROC9 (816 aa).

The interval 26 to 104 (VFGRKNGPAA…RRKNYHRHTA (79 aa)) is disordered. Over residues 92–101 (KKRRRKNYHR) the composition is skewed to basic residues. The homeobox DNA-binding region spans 95–154 (RRKNYHRHTAEQIRIMEALFKESPHPDERQRQQVSKQLGLSARQVKFWFQNRRTQIKAVQ). The stretch at 149–182 (QIKAVQERHENSLLKSELEKLQDEHRAMRELAKK) forms a coiled coil. Residues 265-296 (KSAADGIASPPCSASAGAMQTNSRSPPLHDHD) are disordered. The region spanning 302-541 (HDDDKPRILE…LQLQCERMVF (240 aa)) is the START domain.

Belongs to the HD-ZIP homeobox family. Class IV subfamily.

It is found in the nucleus. Its function is as follows. Probable transcription factor. This chain is Homeobox-leucine zipper protein ROC9 (ROC9), found in Oryza sativa subsp. japonica (Rice).